A 430-amino-acid polypeptide reads, in one-letter code: Tyrosine--tRNA ligase (430 aa).

L-tyrosine is bound at residue Y32. A 'HIGH' region motif is present at residues 37–46 (PTADSLHIGH). L-tyrosine-binding residues include Y172 and Q176. Residues 232-236 (KFGKT) carry the 'KMSKS' region motif. K235 serves as a coordination point for ATP. Residues 362 to 429 (VKAVDLFVDN…GKKNYFLLIA (68 aa)) enclose the S4 RNA-binding domain.

The protein belongs to the class-I aminoacyl-tRNA synthetase family. TyrS type 1 subfamily. In terms of assembly, homodimer.

It is found in the cytoplasm. It catalyses the reaction tRNA(Tyr) + L-tyrosine + ATP = L-tyrosyl-tRNA(Tyr) + AMP + diphosphate + H(+). Its function is as follows. Catalyzes the attachment of tyrosine to tRNA(Tyr) in a two-step reaction: tyrosine is first activated by ATP to form Tyr-AMP and then transferred to the acceptor end of tRNA(Tyr). This is Tyrosine--tRNA ligase from Bacteroides thetaiotaomicron (strain ATCC 29148 / DSM 2079 / JCM 5827 / CCUG 10774 / NCTC 10582 / VPI-5482 / E50).